A 176-amino-acid chain; its full sequence is Epididymal-specific lipocalin-9 (176 aa).

A signal peptide spans 1-15; that stretch reads MALLLLSLGLSLIAA. 2 N-linked (GlcNAc...) asparagine glycosylation sites follow: asparagine 68 and asparagine 129. Cysteines 83 and 161 form a disulfide.

Belongs to the calycin superfamily. Lipocalin family.

Its subcellular location is the secreted. The sequence is that of Epididymal-specific lipocalin-9 from Homo sapiens (Human).